The following is a 160-amino-acid chain: Transcription elongation factor GreB (160 aa).

It belongs to the GreA/GreB family. GreB subfamily.

Functionally, necessary for efficient RNA polymerase transcription elongation past template-encoded arresting sites. The arresting sites in DNA have the property of trapping a certain fraction of elongating RNA polymerases that pass through, resulting in locked ternary complexes. Cleavage of the nascent transcript by cleavage factors such as GreA or GreB allows the resumption of elongation from the new 3'terminus. GreB releases sequences of up to 9 nucleotides in length. This Vibrio vulnificus (strain YJ016) protein is Transcription elongation factor GreB.